We begin with the raw amino-acid sequence, 305 residues long: Cell division control protein 2 homolog C (305 aa).

The 294-residue stretch at 4 to 297 (YEKLEKVGEG…AKAALDHPYF (294 aa)) folds into the Protein kinase domain. ATP-binding positions include 10-18 (VGEGTYGKV) and Lys-33. A Phosphothreonine modification is found at Thr-14. Residue Tyr-15 is modified to Phosphotyrosine. Asp-138 functions as the Proton acceptor in the catalytic mechanism. Thr-172 carries the post-translational modification Phosphothreonine; by CAK.

Belongs to the protein kinase superfamily. CMGC Ser/Thr protein kinase family. CDC2/CDKX subfamily.

The catalysed reaction is L-seryl-[protein] + ATP = O-phospho-L-seryl-[protein] + ADP + H(+). The enzyme catalyses L-threonyl-[protein] + ATP = O-phospho-L-threonyl-[protein] + ADP + H(+). It carries out the reaction [DNA-directed RNA polymerase] + ATP = phospho-[DNA-directed RNA polymerase] + ADP + H(+). Functionally, plays a key role in the control of the eukaryotic cell cycle. The polypeptide is Cell division control protein 2 homolog C (CDC2C) (Antirrhinum majus (Garden snapdragon)).